The sequence spans 396 residues: Metacaspase-1 (396 aa).

A compositionally biased stretch (gly residues) spans 1–20 (MSGYPGQGYQGQGYGQGYGQ). Residues 1–86 (MSGYPGQGYQ…PQGMQQFGHG (86 aa)) are disordered. Over residues 47-62 (HYQYGPPQGGYQYPPQ) the composition is skewed to low complexity. Residues 72-81 (QAHQPPQGMQ) are compositionally biased toward polar residues. Residues His186 and Cys242 contribute to the active site.

The protein belongs to the peptidase C14B family.

In terms of biological role, involved in cell death (apoptosis). The sequence is that of Metacaspase-1 (MCA1) from Pyricularia oryzae (strain 70-15 / ATCC MYA-4617 / FGSC 8958) (Rice blast fungus).